The sequence spans 504 residues: Biotinidase (504 aa).

The N-terminal stretch at 1–20 is a signal peptide; it reads MFSFGTVFTFALLLIPLTEA. The region spanning 30–309 is the CN hydrolase domain; it reads YEHNLILNPD…GRLLVARVPV (280 aa). Catalysis depends on E79, which acts as the Proton acceptor. 2 N-linked (GlcNAc...) asparagine glycosylation sites follow: N86 and N117. The active-site Proton donor is K181. The active-site Nucleophile is the C214. N-linked (GlcNAc...) asparagine glycosylation is found at N261, N365, and N375.

This sequence belongs to the carbon-nitrogen hydrolase superfamily. BTD/VNN family.

It localises to the secreted. The protein resides in the extracellular space. The enzyme catalyses biocytin + H2O = biotin + L-lysine. It carries out the reaction biotin amide + H2O = biotin + NH4(+). Functionally, catalytic release of biotin from biocytin, the product of biotin-dependent carboxylases degradation. The chain is Biotinidase (btd) from Takifugu rubripes (Japanese pufferfish).